Consider the following 239-residue polypeptide: MGKRILPQRMGRGTPTFRSPSHRRVGPAKYPPLKLDRTIKGKIIDLLHDPGRWVPLAKIVLEDGTTFLTPAVEGMYVGQIIEIGPDAHISNGNILPIGKIPEGTQIANIEKRPGDGGKFVRSSGTYALIVGRAGTKTQVQLPSGKIIEVPNNARATIGVIAGGGRDEKPLLKAGNAYHKWKVKAKKWPKVRGVAMNAVSHPHGGGSHQHVGKPSTVARETPPGRKVGHIAARRTGRRKG.

Disordered stretches follow at residues 1 to 28 (MGKRILPQRMGRGTPTFRSPSHRRVGPA) and 199 to 239 (SHPH…RRKG). The span at 225–239 (KVGHIAARRTGRRKG) shows a compositional bias: basic residues.

The protein belongs to the universal ribosomal protein uL2 family. Part of the 50S ribosomal subunit. Forms a bridge to the 30S subunit in the 70S ribosome.

Functionally, one of the primary rRNA binding proteins. Required for association of the 30S and 50S subunits to form the 70S ribosome, for tRNA binding and peptide bond formation. It has been suggested to have peptidyltransferase activity; this is somewhat controversial. Makes several contacts with the 16S rRNA in the 70S ribosome. In Staphylothermus marinus (strain ATCC 43588 / DSM 3639 / JCM 9404 / F1), this protein is Large ribosomal subunit protein uL2.